The sequence spans 488 residues: Serine protease HTR4 (488 aa).

An N-terminal signal peptide occupies residues 1–35 (MSRSKMSSQRLWAVRAQFLLLWLLLWAAPVPWAEA). Residues 40 to 118 (VSLPCPDACD…RAWLGTCGCA (79 aa)) enclose the IGFBP N-terminal domain. Cystine bridges form between C44–C70, C48–C72, C53–C73, C59–C76, C84–C98, and C92–C115. The tract at residues 213-373 (GSGFIVSEDG…IPSDRIRQFL (161 aa)) is serine protease. Active-site charge relay system residues include H229, D259, and S337. The 93-residue stretch at 384 to 476 (KAPLQKKYLG…LSIIVLRGSQ (93 aa)) folds into the PDZ domain.

Belongs to the peptidase S1C family.

The protein resides in the secreted. Functionally, serine protease. The sequence is that of Serine protease HTR4 (Htra4) from Rattus norvegicus (Rat).